A 693-amino-acid polypeptide reads, in one-letter code: Translation initiation factor IF-2 (693 aa).

The region spanning 181–349 (PRPPVVTVMG…MILLVAEMNE (169 aa)) is the tr-type G domain. Residues 190 to 197 (GHVDHGKT) are G1. 190 to 197 (GHVDHGKT) contacts GTP. Positions 215 to 219 (GITQS) are G2. The G3 stretch occupies residues 236–239 (DTPG). GTP is bound by residues 236 to 240 (DTPGH) and 290 to 293 (NKID). The G4 stretch occupies residues 290–293 (NKID). Residues 327–329 (SAR) form a G5 region.

This sequence belongs to the TRAFAC class translation factor GTPase superfamily. Classic translation factor GTPase family. IF-2 subfamily.

It is found in the cytoplasm. In terms of biological role, one of the essential components for the initiation of protein synthesis. Protects formylmethionyl-tRNA from spontaneous hydrolysis and promotes its binding to the 30S ribosomal subunits. Also involved in the hydrolysis of GTP during the formation of the 70S ribosomal complex. The sequence is that of Translation initiation factor IF-2 from Thermotoga petrophila (strain ATCC BAA-488 / DSM 13995 / JCM 10881 / RKU-1).